The chain runs to 735 residues: MATKFPSFSQGLAQDPTTRRIWYGIATAHDFESHDGMTEERLYQKLFSTHFGHLAIIGLWVSGNLFHIAWQGNFEQWVADPLHVRPIAHAIWDPHFGQGAIDAFTQAGASSPVNIAYSGLYHWFYTIGMTTNAELYQGSIFMMILSAWALFAGWLHLQPKFRPSLAWFKNAESRLNHHLAVLFGFSSIAWTGHLVHVAIPESRGQHVGWDNFLSVMPHPAGLGPFFTGNWGVYAQNPDSMNQVFGSTEGSGTAILTFLGGFHPQTEALWLTDIAHHHLAIGCLFVIAGHMYRTNFGIGHSIKEILETHNPPKGTPGDLGAGHKGLYDTINNSLHFQLGLALASLGVVTSLVAQHMYAMPSYAFIAKDYTTSAALYTHHQYIAIALMCGAFAHGAIFFIRDYDPEANKDNVLARMLEHKEAIISHLSWVSLFLGFHTLGLYVHNDVVVAFGTPEKQILVEPVFAQFVQAASGKAIYGFDVLLSNAGGAAANANAAYMDGWMGAINGNTDVFLPIGPGDFLVHHAIALGLHTTTLILVKGALDARGSKLMPDKKDFGYSFPCDGPGRGGTCDISAWDAFYLAVFWALNTVGWLTFYWHWKHLAIWSGNVAQFNESSTYLMGWFRDYLWLNSSQLINGYNPFGSNNLAVWSWMFLFGHLVWATGFMFLISWRGYWQELIETIVWAHQRSPIANMMGWRDKPVALSIVQARVVGLAHFSVGYVLTYAAFLIASTSGKFG.

8 helical membrane passes run 46 to 69, 135 to 158, 175 to 199, 273 to 291, 333 to 356, 372 to 398, 420 to 442, and 518 to 536; these read LFST…FHIA, LYQG…LHLQ, LNHH…HVAI, IAHH…GHMY, LHFQ…QHMY, AALY…IFFI, AIIS…LYVH, and FLVH…LILV. Positions 560 and 569 each coordinate [4Fe-4S] cluster. The next 2 helical transmembrane spans lie at 576-597 and 644-666; these read AFYL…YWHW and LAVW…MFLI. Positions 655, 663, and 671 each coordinate chlorophyll a. Trp-672 contacts phylloquinone. A helical membrane pass occupies residues 708–728; sequence VVGLAHFSVGYVLTYAAFLIA.

Belongs to the PsaA/PsaB family. In terms of assembly, the PsaA/B heterodimer binds the P700 chlorophyll special pair and subsequent electron acceptors. PSI consists of a core antenna complex that captures photons, and an electron transfer chain that converts photonic excitation into a charge separation. The cyanobacterial PSI reaction center is composed of one copy each of PsaA,B,C,D,E,F,I,J,K,L,M and X, and forms trimeric complexes. PSI electron transfer chain: 5 chlorophyll a, 1 chlorophyll a', 2 phylloquinones and 3 4Fe-4S clusters. PSI core antenna: 90 chlorophyll a, 22 carotenoids, 3 phospholipids and 1 galactolipid. P700 is a chlorophyll a/chlorophyll a' dimer, A0 is one or more chlorophyll a, A1 is one or both phylloquinones and FX is a shared 4Fe-4S iron-sulfur center. serves as cofactor.

Its subcellular location is the cellular thylakoid membrane. The enzyme catalyses reduced [plastocyanin] + hnu + oxidized [2Fe-2S]-[ferredoxin] = oxidized [plastocyanin] + reduced [2Fe-2S]-[ferredoxin]. Its function is as follows. PsaA and PsaB bind P700, the primary electron donor of photosystem I (PSI), as well as the electron acceptors A0, A1 and FX. PSI is a plastocyanin/cytochrome c6-ferredoxin oxidoreductase, converting photonic excitation into a charge separation, which transfers an electron from the donor P700 chlorophyll pair to the spectroscopically characterized acceptors A0, A1, FX, FA and FB in turn. Oxidized P700 is reduced on the lumenal side of the thylakoid membrane by plastocyanin or cytochrome c6. This is Photosystem I P700 chlorophyll a apoprotein A2 from Synechococcus sp. (strain CC9902).